The primary structure comprises 456 residues: RuvB-like helicase 1 (456 aa).

71–78 (GGAGTGKT) serves as a coordination point for ATP.

The protein belongs to the RuvB family. In terms of assembly, may form heterododecamers with RVB2. Component of the SWR1 chromatin remodeling complex, the INO80 chromatin remodeling complex, and of the R2TP complex.

It is found in the nucleus. The catalysed reaction is ATP + H2O = ADP + phosphate + H(+). Its function is as follows. DNA helicase which participates in several chromatin remodeling complexes, including the SWR1 and the INO80 complexes. The SWR1 complex mediates the ATP-dependent exchange of histone H2A for the H2A variant HZT1 leading to transcriptional regulation of selected genes by chromatin remodeling. The INO80 complex remodels chromatin by shifting nucleosomes and is involved in DNA repair. Also involved in pre-rRNA processing. This Schizosaccharomyces pombe (strain 972 / ATCC 24843) (Fission yeast) protein is RuvB-like helicase 1 (rvb1).